A 228-amino-acid polypeptide reads, in one-letter code: Translation initiation factor 6 (228 aa).

This sequence belongs to the eIF-6 family.

Its function is as follows. Binds to the 50S ribosomal subunit and prevents its association with the 30S ribosomal subunit to form the 70S initiation complex. The chain is Translation initiation factor 6 from Thermococcus onnurineus (strain NA1).